The following is a 193-amino-acid chain: Peptidyl-tRNA hydrolase (193 aa).

His17 is a binding site for tRNA. Catalysis depends on His22, which acts as the Proton acceptor. TRNA is bound by residues Phe68, Asn70, and Asn116.

This sequence belongs to the PTH family. Monomer.

It is found in the cytoplasm. The enzyme catalyses an N-acyl-L-alpha-aminoacyl-tRNA + H2O = an N-acyl-L-amino acid + a tRNA + H(+). Functionally, hydrolyzes ribosome-free peptidyl-tRNAs (with 1 or more amino acids incorporated), which drop off the ribosome during protein synthesis, or as a result of ribosome stalling. In terms of biological role, catalyzes the release of premature peptidyl moieties from peptidyl-tRNA molecules trapped in stalled 50S ribosomal subunits, and thus maintains levels of free tRNAs and 50S ribosomes. The polypeptide is Peptidyl-tRNA hydrolase (Xanthomonas campestris pv. campestris (strain 8004)).